A 445-amino-acid polypeptide reads, in one-letter code: Lipid A 1-phosphatase (445 aa).

The signal sequence occupies residues 1-22 (MNRESFLLLLVLLFALPLHLQA).

It localises to the periplasm. The protein operates within bacterial outer membrane biogenesis; LPS lipid A biosynthesis. Its function is as follows. Removes the 1-phosphate group from lipid A species. Absence of phosphate groups in lipid A renders the bacteria resistant to host-derived cationic antimicrobial peptides (CAMP) and allowing it to camouflage itself from the host innate immune response. The sequence is that of Lipid A 1-phosphatase from Porphyromonas gingivalis (strain ATCC 33277 / DSM 20709 / CIP 103683 / JCM 12257 / NCTC 11834 / 2561).